The sequence spans 59 residues: RVLLTICLLLFPLTAIPLGGDQPAERMRNVRSAVQDPRFDSVGWCCPIQGCILGCTPCC.

The first 15 residues, R1–A15, serve as a signal peptide directing secretion. A propeptide spanning residues I16 to W44 is cleaved from the precursor. 3 cysteine pairs are disulfide-bonded: C45–C59, C46–C55, and C51–C58.

It belongs to the conotoxin M superfamily. Expressed by the venom duct.

The protein localises to the secreted. The chain is Conotoxin reg3.15 from Conus regius (Crown cone).